The chain runs to 107 residues: Nucleoid-associated protein AZOSEA06390 (107 aa).

Belongs to the YbaB/EbfC family. Homodimer.

It is found in the cytoplasm. The protein resides in the nucleoid. Binds to DNA and alters its conformation. May be involved in regulation of gene expression, nucleoid organization and DNA protection. This chain is Nucleoid-associated protein AZOSEA06390, found in Aromatoleum aromaticum (strain DSM 19018 / LMG 30748 / EbN1) (Azoarcus sp. (strain EbN1)).